The following is a 198-amino-acid chain: Glycerol-3-phosphate acyltransferase (198 aa).

Transmembrane regions (helical) follow at residues 6–26, 55–75, 83–103, 113–133, and 154–174; these read FLPV…GLIL, GLAA…VIIS, AAMI…WLKF, IGIL…VWLA, and IVLW…LTLL.

It belongs to the PlsY family. In terms of assembly, probably interacts with PlsX.

Its subcellular location is the cell inner membrane. The enzyme catalyses an acyl phosphate + sn-glycerol 3-phosphate = a 1-acyl-sn-glycero-3-phosphate + phosphate. Its pathway is lipid metabolism; phospholipid metabolism. In terms of biological role, catalyzes the transfer of an acyl group from acyl-phosphate (acyl-PO(4)) to glycerol-3-phosphate (G3P) to form lysophosphatidic acid (LPA). This enzyme utilizes acyl-phosphate as fatty acyl donor, but not acyl-CoA or acyl-ACP. This chain is Glycerol-3-phosphate acyltransferase, found in Bradyrhizobium sp. (strain BTAi1 / ATCC BAA-1182).